We begin with the raw amino-acid sequence, 73 residues long: Protein SlyX homolog (73 aa).

It belongs to the SlyX family.

The chain is Protein SlyX homolog from Haemophilus influenzae (strain PittEE).